The sequence spans 958 residues: Glycine dehydrogenase (decarboxylating) (958 aa).

Position 708 is an N6-(pyridoxal phosphate)lysine (lysine 708).

This sequence belongs to the GcvP family. The glycine cleavage system is composed of four proteins: P, T, L and H. Requires pyridoxal 5'-phosphate as cofactor.

The catalysed reaction is N(6)-[(R)-lipoyl]-L-lysyl-[glycine-cleavage complex H protein] + glycine + H(+) = N(6)-[(R)-S(8)-aminomethyldihydrolipoyl]-L-lysyl-[glycine-cleavage complex H protein] + CO2. Its function is as follows. The glycine cleavage system catalyzes the degradation of glycine. The P protein binds the alpha-amino group of glycine through its pyridoxal phosphate cofactor; CO(2) is released and the remaining methylamine moiety is then transferred to the lipoamide cofactor of the H protein. The chain is Glycine dehydrogenase (decarboxylating) from Photorhabdus laumondii subsp. laumondii (strain DSM 15139 / CIP 105565 / TT01) (Photorhabdus luminescens subsp. laumondii).